A 122-amino-acid chain; its full sequence is uncharacterized protein (122 aa).

Belongs to the phage O protein family.

This is an uncharacterized protein from Escherichia coli O6:H1 (strain CFT073 / ATCC 700928 / UPEC).